The primary structure comprises 416 residues: Serine hydroxymethyltransferase (416 aa).

(6S)-5,6,7,8-tetrahydrofolate contacts are provided by residues Leu-121 and 125–127 (GHL). Lys-230 carries the N6-(pyridoxal phosphate)lysine modification.

This sequence belongs to the SHMT family. Homodimer. It depends on pyridoxal 5'-phosphate as a cofactor.

The protein resides in the cytoplasm. It carries out the reaction (6R)-5,10-methylene-5,6,7,8-tetrahydrofolate + glycine + H2O = (6S)-5,6,7,8-tetrahydrofolate + L-serine. It functions in the pathway one-carbon metabolism; tetrahydrofolate interconversion. Its pathway is amino-acid biosynthesis; glycine biosynthesis; glycine from L-serine: step 1/1. Its function is as follows. Catalyzes the reversible interconversion of serine and glycine with tetrahydrofolate (THF) serving as the one-carbon carrier. This reaction serves as the major source of one-carbon groups required for the biosynthesis of purines, thymidylate, methionine, and other important biomolecules. Also exhibits THF-independent aldolase activity toward beta-hydroxyamino acids, producing glycine and aldehydes, via a retro-aldol mechanism. This Nitrosomonas eutropha (strain DSM 101675 / C91 / Nm57) protein is Serine hydroxymethyltransferase.